The following is a 337-amino-acid chain: Transaldolase (337 aa).

The Nuclear localization signal motif lies at 1–10; that stretch reads MSSSPVKRQR. At lysine 115 the chain carries N6-acetyllysine. Catalysis depends on lysine 142, which acts as the Schiff-base intermediate with substrate. Lysine 219 is subject to N6-acetyllysine. Phosphoserine is present on residues serine 237 and serine 256. 3 positions are modified to N6-acetyllysine: lysine 269, lysine 286, and lysine 321.

Belongs to the transaldolase family. Type 1 subfamily. In terms of assembly, homodimer. Heterodimer with isoform 2. Interacts with KPNA1 and KPNA4.

The protein localises to the nucleus. The protein resides in the cytoplasm. It carries out the reaction D-sedoheptulose 7-phosphate + D-glyceraldehyde 3-phosphate = D-erythrose 4-phosphate + beta-D-fructose 6-phosphate. Its pathway is carbohydrate degradation; pentose phosphate pathway; D-glyceraldehyde 3-phosphate and beta-D-fructose 6-phosphate from D-ribose 5-phosphate and D-xylulose 5-phosphate (non-oxidative stage): step 2/3. Catalyzes the rate-limiting step of the non-oxidative phase in the pentose phosphate pathway. Catalyzes the reversible conversion of sedheptulose-7-phosphate and D-glyceraldehyde 3-phosphate into erythrose-4-phosphate and beta-D-fructose 6-phosphate. Not only acts as a pentose phosphate pathway enzyme, but also affects other metabolite pathways by altering its subcellular localization between the nucleus and the cytoplasm. The polypeptide is Transaldolase (Homo sapiens (Human)).